Consider the following 647-residue polypeptide: RAF proto-oncogene serine/threonine-protein kinase (647 aa).

Serine 43 is modified (phosphoserine). The region spanning asparagine 56 to leucine 131 is the RBD domain. The Phorbol-ester/DAG-type zinc-finger motif lies at threonine 138–cysteine 184. Disordered regions lie at residues histidine 236–threonine 269 and histidine 284–glycine 334. Over residues threonine 239–threonine 269 the composition is skewed to polar residues. Serine 259 is subject to Phosphoserine. Threonine 268 is subject to Phosphothreonine; by autocatalysis. Residues glutamate 286–proline 297 are compositionally biased toward low complexity. Over residues asparagine 298–lysine 309 the composition is skewed to polar residues. The residue at position 338 (serine 338) is a Phosphoserine. The Protein kinase domain occupies valine 349–leucine 609. ATP contacts are provided by residues isoleucine 355–valine 363 and lysine 375. Aspartate 468 acts as the Proton acceptor in catalysis. Phosphoserine occurs at positions 499 and 621.

It belongs to the protein kinase superfamily. TKL Ser/Thr protein kinase family. RAF subfamily. Post-translationally, phosphorylation at Ser-259 inactivates kinase activity. Dephosphorylation of Ser-259 by a complex containing protein phosphatase 1 relieves inactivation, leading to stimulate RAF1 activity. In terms of tissue distribution, isoform 1 was present in all tissues tested: skeletal muscle, intestine, brain, gizzard, heart, lung, kidney, bone marrow, spleen and bursa of Fabricius. Isoform 2 was only detected in brain, heart and skeletal muscle. In brain and heart isoform 1 is more abundant than isoform 2. In skeletal muscle isoform 2 is more abundant than isoform 1.

It localises to the cytoplasm. The protein resides in the cell membrane. It carries out the reaction L-seryl-[protein] + ATP = O-phospho-L-seryl-[protein] + ADP + H(+). The catalysed reaction is L-threonyl-[protein] + ATP = O-phospho-L-threonyl-[protein] + ADP + H(+). Serine/threonine-protein kinase that acts as a regulatory link between the membrane-associated Ras GTPases and the MAPK/ERK cascade, and this critical regulatory link functions as a switch determining cell fate decisions. RAF1 activation initiates a mitogen-activated protein kinase (MAPK) cascade that comprises a sequential phosphorylation of the dual-specific MAPK kinases (MAP2K1/MEK1 and MAP2K2/MEK2) and the extracellular signal-regulated kinases (MAPK3/ERK1 and MAPK1/ERK2). The polypeptide is RAF proto-oncogene serine/threonine-protein kinase (RAF1) (Gallus gallus (Chicken)).